The chain runs to 217 residues: UPF0173 metal-dependent hydrolase MJ1163 (217 aa).

Belongs to the UPF0173 family.

In Methanocaldococcus jannaschii (strain ATCC 43067 / DSM 2661 / JAL-1 / JCM 10045 / NBRC 100440) (Methanococcus jannaschii), this protein is UPF0173 metal-dependent hydrolase MJ1163.